A 94-amino-acid polypeptide reads, in one-letter code: MIRSELIQKIADENPHLYQRDVERIVNTVFEEVTDAMARGDRVELRGFGAFSVKKRDARIGRNPRTGDTVHVEEKHVPFFKTGKLLRDRLNGKA.

The protein belongs to the bacterial histone-like protein family. Heterodimer of an alpha and a beta chain.

This protein is one of the two subunits of integration host factor, a specific DNA-binding protein that functions in genetic recombination as well as in transcriptional and translational control. The chain is Integration host factor subunit beta from Ruegeria pomeroyi (strain ATCC 700808 / DSM 15171 / DSS-3) (Silicibacter pomeroyi).